The sequence spans 367 residues: Flagellar P-ring protein (367 aa).

An N-terminal signal peptide occupies residues Met1–Ala21.

The protein belongs to the FlgI family. The basal body constitutes a major portion of the flagellar organelle and consists of four rings (L,P,S, and M) mounted on a central rod.

It is found in the periplasm. The protein localises to the bacterial flagellum basal body. In terms of biological role, assembles around the rod to form the L-ring and probably protects the motor/basal body from shearing forces during rotation. The chain is Flagellar P-ring protein from Nitrosococcus oceani (strain ATCC 19707 / BCRC 17464 / JCM 30415 / NCIMB 11848 / C-107).